The following is a 744-amino-acid chain: Phosphoribosylformylglycinamidine synthase subunit PurL (744 aa).

H49 is an active-site residue. The ATP site is built by Y52 and K91. E93 contacts Mg(2+). Substrate is bound by residues 94–97 and R116; that span reads SHNH. H95 acts as the Proton acceptor in catalysis. D117 lines the Mg(2+) pocket. Q240 is a binding site for substrate. D268 contributes to the Mg(2+) binding site. 312 to 314 provides a ligand contact to substrate; that stretch reads ESQ. D493 and G530 together coordinate ATP. N531 serves as a coordination point for Mg(2+). S533 contacts substrate.

The protein belongs to the FGAMS family. As to quaternary structure, monomer. Part of the FGAM synthase complex composed of 1 PurL, 1 PurQ and 2 PurS subunits.

Its subcellular location is the cytoplasm. The enzyme catalyses N(2)-formyl-N(1)-(5-phospho-beta-D-ribosyl)glycinamide + L-glutamine + ATP + H2O = 2-formamido-N(1)-(5-O-phospho-beta-D-ribosyl)acetamidine + L-glutamate + ADP + phosphate + H(+). It functions in the pathway purine metabolism; IMP biosynthesis via de novo pathway; 5-amino-1-(5-phospho-D-ribosyl)imidazole from N(2)-formyl-N(1)-(5-phospho-D-ribosyl)glycinamide: step 1/2. Functionally, part of the phosphoribosylformylglycinamidine synthase complex involved in the purines biosynthetic pathway. Catalyzes the ATP-dependent conversion of formylglycinamide ribonucleotide (FGAR) and glutamine to yield formylglycinamidine ribonucleotide (FGAM) and glutamate. The FGAM synthase complex is composed of three subunits. PurQ produces an ammonia molecule by converting glutamine to glutamate. PurL transfers the ammonia molecule to FGAR to form FGAM in an ATP-dependent manner. PurS interacts with PurQ and PurL and is thought to assist in the transfer of the ammonia molecule from PurQ to PurL. This is Phosphoribosylformylglycinamidine synthase subunit PurL from Nitrobacter hamburgensis (strain DSM 10229 / NCIMB 13809 / X14).